Reading from the N-terminus, the 313-residue chain is Aspartate carbamoyltransferase catalytic subunit (313 aa).

Residues Arg-66 and Thr-67 each coordinate carbamoyl phosphate. Lys-94 contributes to the L-aspartate binding site. Carbamoyl phosphate contacts are provided by Arg-116, His-144, and Gln-147. Arg-177 and Arg-231 together coordinate L-aspartate. The carbamoyl phosphate site is built by Gly-272 and Pro-273.

The protein belongs to the aspartate/ornithine carbamoyltransferase superfamily. ATCase family. Heterododecamer (2C3:3R2) of six catalytic PyrB chains organized as two trimers (C3), and six regulatory PyrI chains organized as three dimers (R2).

The catalysed reaction is carbamoyl phosphate + L-aspartate = N-carbamoyl-L-aspartate + phosphate + H(+). The protein operates within pyrimidine metabolism; UMP biosynthesis via de novo pathway; (S)-dihydroorotate from bicarbonate: step 2/3. In terms of biological role, catalyzes the condensation of carbamoyl phosphate and aspartate to form carbamoyl aspartate and inorganic phosphate, the committed step in the de novo pyrimidine nucleotide biosynthesis pathway. In Pelagibacter ubique (strain HTCC1062), this protein is Aspartate carbamoyltransferase catalytic subunit.